The sequence spans 358 residues: tRNA (guanine(26)-N(2))-dimethyltransferase (358 aa).

Residues 5–354 (VIRREGKAVF…ATYGEVERVL (350 aa)) form the Trm1 methyltransferase domain. Arginine 39, arginine 69, aspartate 87, aspartate 113, and alanine 114 together coordinate S-adenosyl-L-methionine.

It belongs to the class I-like SAM-binding methyltransferase superfamily. Trm1 family.

It carries out the reaction guanosine(26) in tRNA + 2 S-adenosyl-L-methionine = N(2)-dimethylguanosine(26) in tRNA + 2 S-adenosyl-L-homocysteine + 2 H(+). Its function is as follows. Dimethylates a single guanine residue at position 26 of a number of tRNAs using S-adenosyl-L-methionine as donor of the methyl groups. This Pyrobaculum calidifontis (strain DSM 21063 / JCM 11548 / VA1) protein is tRNA (guanine(26)-N(2))-dimethyltransferase.